We begin with the raw amino-acid sequence, 391 residues long: Candidapepsin-1 (391 aa).

A signal peptide spans 1–18 (MFLKNIFIALAIALLVDA). Positions 19–50 (SPAKRSPGFVTLDFDVIKTPVNATGQEGKVKR) are cleaved as a propeptide — activation peptide. The N-linked (GlcNAc...) asparagine glycan is linked to N40. A Peptidase A1 domain is found at 64–377 (YAADITIGSN…DLDDDKISLA (314 aa)). D82 is an active-site residue. C97 and C109 are joined by a disulfide. Residue D267 is part of the active site. A disulfide bridge links C305 with C343.

The protein belongs to the peptidase A1 family. Post-translationally, O-glycosylated.

The protein localises to the secreted. The catalysed reaction is Preferential cleavage at the carboxyl of hydrophobic amino acids, but fails to cleave 15-Leu-|-Tyr-16, 16-Tyr-|-Leu-17 and 24-Phe-|-Phe-25 of insulin B chain. Activates trypsinogen, and degrades keratin.. This chain is Candidapepsin-1 (SAP1), found in Candida albicans (strain WO-1) (Yeast).